We begin with the raw amino-acid sequence, 381 residues long: UDP-4-amino-4-deoxy-L-arabinose--oxoglutarate aminotransferase (381 aa).

Lys182 is modified (N6-(pyridoxal phosphate)lysine).

This sequence belongs to the DegT/DnrJ/EryC1 family. ArnB subfamily. As to quaternary structure, homodimer. Pyridoxal 5'-phosphate serves as cofactor.

The enzyme catalyses UDP-4-amino-4-deoxy-beta-L-arabinose + 2-oxoglutarate = UDP-beta-L-threo-pentopyranos-4-ulose + L-glutamate. It functions in the pathway nucleotide-sugar biosynthesis; UDP-4-deoxy-4-formamido-beta-L-arabinose biosynthesis; UDP-4-deoxy-4-formamido-beta-L-arabinose from UDP-alpha-D-glucuronate: step 2/3. It participates in bacterial outer membrane biogenesis; lipopolysaccharide biosynthesis. Its function is as follows. Catalyzes the conversion of UDP-4-keto-arabinose (UDP-Ara4O) to UDP-4-amino-4-deoxy-L-arabinose (UDP-L-Ara4N). The modified arabinose is attached to lipid A and is required for resistance to polymyxin and cationic antimicrobial peptides. This Proteus mirabilis (strain HI4320) protein is UDP-4-amino-4-deoxy-L-arabinose--oxoglutarate aminotransferase.